We begin with the raw amino-acid sequence, 620 residues long: 1-deoxy-D-xylulose-5-phosphate synthase (620 aa).

Thiamine diphosphate is bound by residues histidine 80 and 121-123 (GHS). Residue aspartate 152 coordinates Mg(2+). Residues 153-154 (GA), asparagine 181, tyrosine 288, and glutamate 370 each bind thiamine diphosphate. Asparagine 181 is a Mg(2+) binding site.

Belongs to the transketolase family. DXPS subfamily. In terms of assembly, homodimer. The cofactor is Mg(2+). Thiamine diphosphate is required as a cofactor.

It catalyses the reaction D-glyceraldehyde 3-phosphate + pyruvate + H(+) = 1-deoxy-D-xylulose 5-phosphate + CO2. The protein operates within metabolic intermediate biosynthesis; 1-deoxy-D-xylulose 5-phosphate biosynthesis; 1-deoxy-D-xylulose 5-phosphate from D-glyceraldehyde 3-phosphate and pyruvate: step 1/1. Catalyzes the acyloin condensation reaction between C atoms 2 and 3 of pyruvate and glyceraldehyde 3-phosphate to yield 1-deoxy-D-xylulose-5-phosphate (DXP). This is 1-deoxy-D-xylulose-5-phosphate synthase from Citrobacter koseri (strain ATCC BAA-895 / CDC 4225-83 / SGSC4696).